Here is a 374-residue protein sequence, read N- to C-terminus: Pulmonary surfactant-associated protein D (374 aa).

Positions 1–19 are cleaved as a signal peptide; that stretch reads MLPFLSMLVLLVQPLGNLG. S-nitrosocysteine is present on residues Cys34 and Cys39. The tract at residues 38-222 is disordered; that stretch reads MCSPTENGLP…GIKGESGLPD (185 aa). The Collagen-like domain maps to 45-221; it reads GLPGRDGRDG…RGIKGESGLP (177 aa). A compositionally biased stretch (basic and acidic residues) spans 49-64; the sequence is RDGRDGREGPRGEKGD. Positions 70–79 are enriched in low complexity; sequence PMGLSGLQGP. A glycan (N-linked (GlcNAc...) asparagine) is linked at Asn89. Low complexity-rich tracts occupy residues 137 to 149 and 169 to 200; these read KGEA…VGAP and APGV…RGPP. The segment covering 203-215 has biased composition (basic and acidic residues); it reads KGDRGVPGDRGIK. Residues 222-253 adopt a coiled-coil conformation; it reads DSAALRQQMEALKGKLQRLEVAFSHYQKAALF. A C-type lectin domain is found at 259-374; that stretch reads VGDKIFRTAD…GEQRLVICEF (116 aa). Cystine bridges form between Cys280-Cys372 and Cys350-Cys364.

It belongs to the SFTPD family. Oligomeric complex of 4 set of homotrimers. In terms of processing, S-nitrosylation at Cys-34 and Cys-39 alters the quaternary structure which results in a pro-inflammatory chemoattractive signaling activity with macrophages.

Its subcellular location is the secreted. The protein localises to the extracellular space. It localises to the extracellular matrix. It is found in the surface film. In terms of biological role, contributes to the lung's defense against inhaled microorganisms, organic antigens and toxins. Interacts with compounds such as bacterial lipopolysaccharides, oligosaccharides and fatty acids and modulates leukocyte action in immune response. May participate in the extracellular reorganization or turnover of pulmonary surfactant. Binds strongly maltose residues and to a lesser extent other alpha-glucosyl moieties. The polypeptide is Pulmonary surfactant-associated protein D (Sftpd) (Mus musculus (Mouse)).